Reading from the N-terminus, the 173-residue chain is Photosystem I assembly protein Ycf3 (173 aa).

TPR repeat units lie at residues 35 to 68 (AYVYYRDGLSAQNDGDYAEALENYEESLKLEENP), 72 to 105 (GETLKNMAIIYMSNGEEDRALATYQKALDENPKQ), and 120 to 153 (GRTAEEEGRRDDADGWFDQAAEVWTQAVRLNPGG).

This sequence belongs to the Ycf3 family.

It is found in the cellular thylakoid membrane. In terms of biological role, essential for the assembly of the photosystem I (PSI) complex. May act as a chaperone-like factor to guide the assembly of the PSI subunits. The protein is Photosystem I assembly protein Ycf3 of Synechococcus sp. (strain WH7803).